A 252-amino-acid chain; its full sequence is Hsp70-Hsp90 organising protein (252 aa).

TPR repeat units follow at residues 7–40, 41–74, and 75–108; these read AQRL…DPLD, HVLY…KKDW, and PKGY…DPNN. Positions 197 to 239 form a coiled coil; sequence EGNDAEERQRQQREEEERRKKKEEEERKKKEEEEMKKQNRTPE. The interval 199-252 is disordered; it reads NDAEERQRQQREEEERRKKKEEEERKKKEEEEMKKQNRTPEQIQGDEHKLKVMN. Basic and acidic residues-rich tracts occupy residues 201–233 and 243–252; these read AEER…EMKK and GDEHKLKVMN.

As to quaternary structure, monomer. Homodimer. Forms a complex composed of HOP and chaperones HSP70 and HSP90; the interaction is stronger in the absence of ATP. Interacts (via TPR 1, 2, 3, 7, 8 and 9 repeats) with HSP70 (via C-terminus); the interaction is direct and is stronger in the absence of ATP. Interacts (via TPR 4, 5 and 6 repeats) with HSP90 (via C-terminus); the interaction is direct.

Its subcellular location is the cytoplasm. Functionally, acts as a co-chaperone and mediates the association of the chaperones HSP70 and HSP90 probably facilitating substrate transfer from HSP70 to HSP90. Stimulates HSP70 ATPase activity and, in contrast, inhibits HSP90 ATPase activity. The sequence is that of Hsp70-Hsp90 organising protein from Plasmodium falciparum.